Reading from the N-terminus, the 699-residue chain is MCGIFGYANFSKERSKDEIANIMINGLKRIEYRGYDSAGFCITDNTDRNFARIRAVGKVNSLYEIKNSQTSVDLTRKVLNHVSIAHTRWATHGQPSIENSHPLSSDENNSFLVVHNGIITNYKDLKVYLKKKGFTFESDTDTECAAKLALYFYREMERKKEETDFVAIVKNVVKHCEGAFAFVFASSLFPNELVTVRKSSPVLIGLKPSGKMSFDFFGVNYGDPADDTPTSLLDSPLAFSKSDRHGFDQNIDMMTRDVQDCTLHAHNKEPLEVFVASDASALIEHTRKVIFLEDNDIVHISNGNISIHRMHSKAKESGPEIREVKTIETELAAIMKGNYDHYMIKEINEQEESVVNTMRGRINFESLTVSLGGLKDHVSGIRKSQRIIFVACGTSYHASLANRALLEELLEIPVSVEIASDFLDRAPPIMRSDCVFFVSQSGETADSVMALRYCMSMGALCVGITNTVGSTISRETACGVHINAGPEIGVASTKAYTSQYIALVLVALQLSDQNLVKQARRREIMEGLKNISSQINRVLELSTSVKSLANGPMKDDASLLLIGRGYQYPTCMEGALKIKEITYIHAEGLAAGELKHGPIALVDDKLRIIFIATKDLLYDKTRNAMEQIFARGGRPIVICTEDISGDYAEYDTFVVPKTVDCLQGILTVIPLQLLSYHLAVAKGYNADFPRNLAKSVTVE.

Cys2 (nucleophile) is an active-site residue. One can recognise a Glutamine amidotransferase type-2 domain in the interval 2-303 (CGIFGYANFS…DNDIVHISNG (302 aa)). SIS domains lie at 377–516 (HVSG…QNLV) and 544–689 (SVKS…ADFP).

It catalyses the reaction D-fructose 6-phosphate + L-glutamine = D-glucosamine 6-phosphate + L-glutamate. Its pathway is nucleotide-sugar biosynthesis; UDP-N-acetyl-alpha-D-glucosamine biosynthesis; alpha-D-glucosamine 6-phosphate from D-fructose 6-phosphate: step 1/1. Functionally, involved in amino sugar synthesis (formation of chitin, supplies the amino sugars of asparagine-linked oligosaccharides of glycoproteins). This is Glutamine--fructose-6-phosphate aminotransferase [isomerizing] (GFA1) from Encephalitozoon cuniculi (strain GB-M1) (Microsporidian parasite).